Here is a 202-residue protein sequence, read N- to C-terminus: Endothelin-1 (202 aa).

Positions 1 to 25 (MDYFPVIFSLLFVAFQGAPETAVLG) are cleaved as a signal peptide. Positions 26–50 (AELSPRAEKEVQSPPPSTSWRPRRS) are excised as a propeptide. The segment at 28-47 (LSPRAEKEVQSPPPSTSWRP) is disordered. 2 disulfide bridges follow: cysteine 53/cysteine 67 and cysteine 55/cysteine 63. The propeptide occupies 74–202 (VNTPERVVPY…DQKLIHNRAH (129 aa)). The tract at residues 110–124 (CQCAHQKDKKCWNFC) is endothelin-like.

It belongs to the endothelin/sarafotoxin family.

It is found in the secreted. Functionally, endothelins are endothelium-derived vasoconstrictor peptides. Probable ligand for G-protein coupled receptors EDNRA and EDNRB which activates PTK2B, BCAR1, BCAR3 and, GTPases RAP1 and RHOA cascade in glomerular mesangial cells. Also binds the DEAR/FBXW7-AS1 receptor. Promotes mesenteric arterial wall remodeling via activation of ROCK signaling and subsequent colocalization of NFATC3 with F-actin filaments. NFATC3 then translocates to the nucleus where it subsequently promotes the transcription of the smooth muscle hypertrophy and differentiation marker ACTA2. The protein is Endothelin-1 (Edn1) of Rattus norvegicus (Rat).